Here is a 525-residue protein sequence, read N- to C-terminus: Cytochrome P450 monooxygenase bsc2 (525 aa).

A helical transmembrane segment spans residues 12 to 32 (SLFILWLTTLLVSVLATAAYI). N-linked (GlcNAc...) asparagine glycosylation is found at asparagine 86 and asparagine 317. Cysteine 456 is a binding site for heme.

Belongs to the cytochrome P450 family. Heme is required as a cofactor.

The protein localises to the membrane. It functions in the pathway mycotoxin biosynthesis. Cytochrome P450 monooxygenase; part of the gene cluster that mediates the biosynthesis of the diterpene glucoside brassicicene C. In the first step of the brassicicene C biosynthesis, the bifunctional diterpene synthase bsc8 that possesses both prenyl transferase and terpene cyclase activity, converts isopentenyl diphosphate and dimethylallyl diphosphate into geranylgeranyl diphosphate (GGDP) that is further converted into fusicocca-2,10(14)-diene, the first precursor for brassicicene C. Fusicocca-2,10(14)-diene is then substrate of cytochrome P450 monooxygenase bsc1 for hydroxylation at the C-8 position. Oxidation at C-16 position to aldehyde is then catalyzed by the cytochrome P450 monooyxygenase bsc7, yielding fusicocca-2,10(14)-diene-8-beta,16-diol. Follows the isomerization of the double bond and reduction of aldehyde to alcohol catalyzed by the short-chain dehydrogenase/reductase bsc3 to yield the diol compound fusicocca-1,10(14)-diene-8 beta,16-diol. The next step is the oxidation at the C-3 position of fusicocca-2,10(14)-diene-8-beta,16-diol catalyzed by the alpha-ketoglutarate dependent dioxygenase bsc9, to produce a triol compound. Methylation of the hydroxy group at position 16 is performed by the methyltransferase bsc6. 16-O-methylation is followed by oxidation at the C-13 position to ketone and an alkyl shift of the methyl group leads to brassicicene C. Although the probable acetyltransferase bsc4 is included in the gene cluster, no acetylation reactions are necessary for brassicicene C biosynthesis. However, the fact that brassicicene E, which is a structurally related compound having an acetoxy group at position 12, was previously isolated from another strain of A.brassicicola suggests that the ATCC 96836 strain might also produce a small amount of brassicicene E. The polypeptide is Cytochrome P450 monooxygenase bsc2 (Alternaria brassicicola (Dark leaf spot agent)).